The chain runs to 117 residues: Dolichyl-diphosphooligosaccharide--protein glycosyltransferase subunit DAD1 (117 aa).

Over 1 to 33 (MAKTSSTTKDAQDLFHAIWSAYSATPTNLKIID) the chain is Cytoplasmic. A helical transmembrane segment spans residues 34 to 54 (LYVVFAVFTALLQDVYMALVG). Residues 55 to 57 (PFP) lie on the Lumenal side of the membrane. Residues 58–78 (FNSFLSGVLSCVGTAVLAVCL) form a helical membrane-spanning segment. The Cytoplasmic segment spans residues 79–96 (RIQVNKENKEFKDLGPER). The chain crosses the membrane as a helical span at residues 97-117 (AFADFVLCNLVLHLVIMNFLG).

The protein belongs to the DAD/OST2 family. Component of the oligosaccharyltransferase (OST) complex.

The protein resides in the endoplasmic reticulum membrane. The protein operates within protein modification; protein glycosylation. Subunit of the oligosaccharyl transferase (OST) complex that catalyzes the initial transfer of a defined glycan (Glc(3)Man(9)GlcNAc(2) in eukaryotes) from the lipid carrier dolichol-pyrophosphate to an asparagine residue within an Asn-X-Ser/Thr consensus motif in nascent polypeptide chains, the first step in protein N-glycosylation. N-glycosylation occurs cotranslationally and the complex associates with the Sec61 complex at the channel-forming translocon complex that mediates protein translocation across the endoplasmic reticulum (ER). All subunits are required for a maximal enzyme activity. This chain is Dolichyl-diphosphooligosaccharide--protein glycosyltransferase subunit DAD1 (DAD1), found in Pisum sativum (Garden pea).